Consider the following 697-residue polypeptide: MAAKLWNLLLVAASVHLVGSVEQLHQDLIHEFSCGHKYYRTFHLDEKRESLYVGALDKVYKLNLTNISLSDCERDSLTLEPTNIANCVSKGKSADFDCKNHIRVIQPMGDGSRLYICGTNAHSPKDWVVYSNLTHLQRHEYVPGIGVGIAKCPFDPEDSSTAVWVENGNPGDLPGLYSGTNAEFTKADTVIFRTDLYNLTTGRREYSFKRTLKYDSKWLDNPNFVGSFDVGEYVLFFFRETAVEYINCGKSVYSRVARVCKKDVGGKNILSQNWATFLKARLNCSIPGEFPFYFNEIQGVYKMPNTDKFFGVFSTSVTGLTGSAICSFTLKDIQEVFSGKFKEQATSSSAWLPVLPSRVPDPRPGECVNDTELLPDTVLNFIRSHPLMDGAVSHEGGKPVFYKRDVLFTQLVVDKLKVNLVGKNMEYIVYYAGTSTGQVYKVVQWYDSGGLPQSLLVDIFDVTPPEPVQALHLSKEYKSLYAASDNIVRQIELVMCHHRYSNCLQCARDPYCGWDRDSNSCKSYTPGLLQDVTNTSANLCEHSVMKKKLIVTWGQSIHLGCFLKVPEVLSSQTISWVHYTKDKGRYPIVYRPDKYIETSEHGLVLISVTDSDSGRYDCWLGGSLLCSYNITVDAHRCSAPGRSNDYQKIYSDWCHEFERSKIAMKTWERKQAQCSTKQNNSNQKTHPNDIFHSNPVA.

An N-terminal signal peptide occupies residues 1 to 20 (MAAKLWNLLLVAASVHLVGS). Residues 21 to 493 (VEQLHQDLIH…SDNIVRQIEL (473 aa)) form the Sema domain. N-linked (GlcNAc...) asparagine glycosylation is found at Asn-63 and Asn-66. A disulfide bond links Cys-87 and Cys-98. N-linked (GlcNAc...) asparagine glycans are attached at residues Asn-132, Asn-198, and Asn-283. Intrachain disulfides connect Cys-260–Cys-367 and Cys-284–Cys-326. N-linked (GlcNAc...) asparagine glycosylation is present at Asn-369. Cystine bridges form between Cys-496-Cys-512 and Cys-506-Cys-521. Residues 526–634 (PGLLQDVTNT…LCSYNITVDA (109 aa)) enclose the Ig-like C2-type domain. N-linked (GlcNAc...) asparagine glycosylation is found at Asn-534, Asn-629, and Asn-679. Cys-618 and Cys-654 are oxidised to a cystine. Over residues 673–685 (QCSTKQNNSNQKT) the composition is skewed to polar residues. The tract at residues 673–697 (QCSTKQNNSNQKTHPNDIFHSNPVA) is disordered.

Belongs to the semaphorin family. In terms of tissue distribution, expressed in a gradient in the developing limb bud epithelium during Ti pioneer axon outgrowth.

The protein resides in the secreted. Functionally, acts as a chemorepulsive guidance molecule critical for axon fasciculation and for determining both the initial direction and subsequent pathfinding events of the Ti axon projection. In Schistocerca gregaria (Desert locust), this protein is Semaphorin-2A (SEMA-2A).